The following is a 688-amino-acid chain: Elongation factor G (688 aa).

The 275-residue stretch at 8 to 282 (DKFRNFGIMA…GVVDYLPSPL (275 aa)) folds into the tr-type G domain. GTP-binding positions include 17–24 (AHIDAGKT), 81–85 (DTPGH), and 135–138 (NKMD).

Belongs to the TRAFAC class translation factor GTPase superfamily. Classic translation factor GTPase family. EF-G/EF-2 subfamily.

It is found in the cytoplasm. Its function is as follows. Catalyzes the GTP-dependent ribosomal translocation step during translation elongation. During this step, the ribosome changes from the pre-translocational (PRE) to the post-translocational (POST) state as the newly formed A-site-bound peptidyl-tRNA and P-site-bound deacylated tRNA move to the P and E sites, respectively. Catalyzes the coordinated movement of the two tRNA molecules, the mRNA and conformational changes in the ribosome. The sequence is that of Elongation factor G from Clostridium beijerinckii (strain ATCC 51743 / NCIMB 8052) (Clostridium acetobutylicum).